We begin with the raw amino-acid sequence, 1514 residues long: Neurexin-1 (1514 aa).

Residues 1 to 30 (MGTALVQRGGCCLLCLSLLLLGCWAELGSG) form the signal peptide. A Laminin G-like 1 domain is found at 31–217 (LEFPGAEGQW…PPNSGGGSPC (187 aa)). Over 31–1438 (LEFPGAEGQW…EVIRESSSTT (1408 aa)) the chain is Extracellular. N-linked (GlcNAc...) asparagine glycans are attached at residues Asn125 and Asn190. The disordered stretch occupies residues 197 to 221 (VDGGEVKLDDEPPNSGGGSPCEAGE). The EGF-like 1 domain occupies 219-256 (AGEEGEGGVCLNGGVCSVVDDQAVCDCSRTGFRGKDCS). Cystine bridges form between Cys228–Cys243 and Cys245–Cys255. Laminin G-like domains lie at 283 to 480 (IATF…AFKC) and 487 to 679 (DPIT…KPSC). Ca(2+) is bound by residues Asp329, Leu346, and Met414. Disulfide bonds link Cys444-Cys480, Cys650-Cys679, Cys687-Cys698, Cys692-Cys707, and Cys709-Cys719. Residues 683–720 (TAKPCLSNPCKNNGMCRDGWNRYVCDCSGTGYLGRSCE) form the EGF-like 2 domain. Laminin G-like domains follow at residues 725–898 (VLSY…IDYC) and 912–1087 (DPVT…ERGC). Ca(2+)-binding residues include Asp772 and Leu789. Residue Asn797 is glycosylated (N-linked (GlcNAc...) asparagine). Ca(2+) is bound at residue Arg848. Intrachain disulfides connect Cys890-Cys898, Cys1059-Cys1087, Cys1094-Cys1105, Cys1099-Cys1114, and Cys1116-Cys1126. One can recognise an EGF-like 3 domain in the interval 1090–1127 (PSTTCQEDSCSNQGVCLQQWDGFSCDCSMTSFSGPLCN). Residues 1133 to 1331 (YIFSKGGGQI…DANIAIVGNV (199 aa)) form the Laminin G-like 6 domain. The Ca(2+) site is built by Asp1183 and Val1200. N-linked (GlcNAc...) asparagine glycosylation occurs at Asn1230. Residues Ile1282 and Asn1284 each coordinate Ca(2+). Ser1392 is a glycosylation site (O-linked (Xyl...) (heparan sulfate) serine). A disordered region spans residues 1396 to 1427 (PSDDEDIDPCEPSSGGLANPTRVGGREPYPGS). A helical membrane pass occupies residues 1439–1459 (GMVVGIVAAAALCILILLYAM). Residues 1460–1514 (YKYRNRDEGSYHVDESRNYISNSAQSNGAVVKEKQPSSAKSANKNKKNKDKEYYV) lie on the Cytoplasmic side of the membrane. Positions 1481–1507 (NSAQSNGAVVKEKQPSSAKSANKNKKN) are interaction with CASK. A disordered region spans residues 1481 to 1514 (NSAQSNGAVVKEKQPSSAKSANKNKKNKDKEYYV).

The protein belongs to the neurexin family. In terms of assembly, interacts (via laminin G-like domain 2 and/or laminin G-like domain 6) with NLGN1 forming a heterotetramer, where one NLGN1 dimer interacts with one NRXN1 dimer. Also interacts (via laminin G-like domain 2 and/or laminin G-like domain 6) with NLGN2, NLGN3 and NLGN4L; interactions with NLGN1, NLGN2, NLGN3 and NLGN4L are calcium-dependent. Interacts (via cytoplasmic C-terminal region) with CASK (via the PDZ, SH3 and guanylate kinase-like domains). Interacts (via cytoplasmic C-terminus) with CASKIN1 and APBA1. Interacts (via laminin G-like domain 2) with NXPH1 and NXPH3. Alpha-type isoforms (neurexin-1-alpha) interact (via laminin G-like domain 2 and/or laminin G-like domain 6) with DAG1 (via alpha-dystroglycan chain). Interacts with LRRTM1, LRRTM2, LRRTM3 and LRRTM4. Interacts with SYT13 and SYTL1. Interacts with CBLN1, CBLN2 and, less avidly, with CBLN4. Interacts with CLSTN3. Post-translationally, O-glycosylated; contains heparan sulfate. Heparan sulfate attachment is required for synapse development by mediating interactions with neuroligins and LRRTM2.

Its subcellular location is the presynaptic cell membrane. Its function is as follows. Cell surface protein involved in cell-cell-interactions, exocytosis of secretory granules and regulation of signal transmission. Function is isoform-specific. Alpha-type isoforms have a long N-terminus with six laminin G-like domains and play an important role in synaptic signal transmission. Alpha-type isoforms play a role in the regulation of calcium channel activity and Ca(2+)-triggered neurotransmitter release at synapses and at neuromuscular junctions. They play an important role in Ca(2+)-triggered exocytosis of secretory granules in pituitary gland. They may affect their functions at synapses and in endocrine cells via their interactions with proteins from the exocytotic machinery. Likewise, alpha-type isoforms play a role in regulating the activity of postsynaptic NMDA receptors, a subtype of glutamate-gated ion channels. Both alpha-type and beta-type isoforms may play a role in the formation or maintenance of synaptic junctions via their interactions (via the extracellular domains) with neuroligin family members, CBLN1 or CBLN2. In vitro, triggers the de novo formation of presynaptic structures. May be involved in specification of excitatory synapses. Alpha-type isoforms were first identified as receptors for alpha-latrotoxin from spider venom. The chain is Neurexin-1 (Nrxn1) from Mus musculus (Mouse).